The sequence spans 499 residues: Lysine--tRNA ligase (499 aa).

Positions 403 and 410 each coordinate Mg(2+).

This sequence belongs to the class-II aminoacyl-tRNA synthetase family. In terms of assembly, homodimer. The cofactor is Mg(2+).

The protein localises to the cytoplasm. It catalyses the reaction tRNA(Lys) + L-lysine + ATP = L-lysyl-tRNA(Lys) + AMP + diphosphate. The chain is Lysine--tRNA ligase from Campylobacter hominis (strain ATCC BAA-381 / DSM 21671 / CCUG 45161 / LMG 19568 / NCTC 13146 / CH001A).